An 875-amino-acid polypeptide reads, in one-letter code: Metal transporter CNNM2 (875 aa).

The Extracellular portion of the chain corresponds to 1-250; the sequence is MIGCGACEPE…TKMIVGEEKK (250 aa). A glycan (N-linked (GlcNAc...) asparagine) is linked at asparagine 112. The disordered stretch occupies residues 122 to 148; that stretch reads EHERRRHTPGERGLGGPAPPEPDSGPQ. Residues 251 to 271 form a helical membrane-spanning segment; that stretch reads FLLPFWLQVIFISLLLCLSGM. The CNNM transmembrane domain occupies 251-431; it reads FLLPFWLQVI…DPYNDLVKEE (181 aa). The Cytoplasmic portion of the chain corresponds to 272 to 313; sequence FSGLNLGLMALDPMELRIVQNCGTEKEKNYAKRIEPVRRQGN. Positions 314 to 334 form an intramembrane region, helical; that stretch reads YLLCSLLLGNVLVNTTLTILL. Residues 335-338 are Cytoplasmic-facing; sequence DDIA. A helical transmembrane segment spans residues 339-359; the sequence is GSGLVAVVVSTIGIVIFGEIV. Topologically, residues 360–368 are extracellular; it reads PQAICSRHG. Residues 369-389 traverse the membrane as a helical segment; it reads LAVGANTIFLTKFFMMMTFPA. Residues 390–875 are Cytoplasmic-facing; it reads SYPVSKLLDC…NHSLHSEGAI (486 aa). 2 CBS domains span residues 450–511 and 518–584; these read MTPL…CTPL and YNHP…ILDE. The tract at residues 741–763 is disordered; it reads AGSPGENKSPPRPCGLNHSDSLS. Phosphoserine is present on serine 761.

Belongs to the ACDP family.

It localises to the cell membrane. Functionally, divalent metal cation transporter. Mediates transport of divalent metal cations in an order of Mg(2+) &gt; Co(2+) &gt; Mn(2+) &gt; Sr(2+) &gt; Ba(2+) &gt; Cu(2+) &gt; Fe(2+). The chain is Metal transporter CNNM2 (Cnnm2) from Rattus norvegicus (Rat).